The sequence spans 358 residues: Bis(monoacylglycero)phosphate synthase CLN5 (358 aa).

The Cytoplasmic portion of the chain corresponds to 1–23 (MAQEVDTAQGAEMRRGAGAARGR). A helical; Signal-anchor for type II membrane protein transmembrane segment spans residues 24 to 40 (ASWCWALALLWLAVVPG). Over 41–358 (WSRVSGIPSR…PIRNKTLSGL (318 aa)) the chain is Lumenal. Disulfide bonds link Cys70–Cys159 and Cys77–Cys165. The Proton acceptor role is filled by His117. N-linked (GlcNAc...) asparagine glycosylation is found at Asn130, Asn143, Asn178, and Asn203. Residue Cys231 is the Nucleophile; Acyl-thioester intermediate of the active site. Asn255, Asn271, and Asn281 each carry an N-linked (GlcNAc...) asparagine glycan. Residues 304-343 (FLLSLLQIFDAVIVHKQFYLFYNFEYWFLPMKFPFIKITY) are membrane-anchoring. Asn352 carries N-linked (GlcNAc...) asparagine glycosylation.

Belongs to the CLN5 family. Multimer. Interacts with SORT1, RAB5A and RAB7A. Interacts with PPT1, TPP1, CLN3, CLN6, CLN8, ATP5F1A and ATP5F1B. In terms of processing, N-glycosylated with both high mannose and complex type sugars. Glycosylation is important for proper folding and trafficking to the lysosomes. Post-translationally, the type II membrane signal anchor is proteolytically cleaved to produce a mature form that is transported to the lysosomes (Bis(monoacylglycero)phosphate synthase CLN5, secreted form). Can undergo proteolytic cleavage at the C-terminus, probably by a cysteine protease and may involve the removal of approximately 10-15 residues from the C-terminal end. As to expression, ubiquitous.

The protein localises to the lysosome. It is found in the membrane. It catalyses the reaction S-hexadecanoyl-L-cysteinyl-[protein] + H2O = L-cysteinyl-[protein] + hexadecanoate + H(+). The catalysed reaction is 2 1-acyl-sn-glycero-3-phospho-(1'-sn-glycerol) = 1-acyl-sn-glycero-3-phospho-(3'-acyl-sn-1'-glycerol) + sn-glycero-3-phospho-(1'-sn-glycerol). The enzyme catalyses 2 1-(9Z-octadecenoyl)-sn-glycero-3-phospho-(1'-sn-glycerol) = 1-(9Z-octadecenoyl)-sn-glycero-3-phospho-(3'-(9Z-octadecenoyl)-1'-sn-glycerol) + sn-glycero-3-phospho-(1'-sn-glycerol). It carries out the reaction 2 1-octadecanoyl-sn-glycero-3-phospho-(1'-sn-glycerol) = 1-octadecanoyl-sn-glycero-3-phospho-(3'-octadecanoyl-1'-sn-glycerol) + sn-glycero-3-phospho-(1'-sn-glycerol). It catalyses the reaction 2 1-hexadecanoyl-sn-glycero-3-phospho-(1'-sn-glycerol) = 1-hexadecanoyl-sn-glycero-3-phospho-(3'-hexadecanoyl-1'-sn-glycerol) + sn-glycero-3-phospho-(1'-sn-glycerol). The catalysed reaction is 2 1-tetradecanoyl-sn-glycero-3-phospho-(1'-sn-glycerol) = 1-tetradecanoyl-sn-glycero-3-phospho-(3'-tetradecanoyl-1'-sn-glycerol) + sn-glycero-3-phospho-(1'-sn-glycerol). With respect to regulation, anionic phospholipids activate bis(monoacylglycero)phosphate (BMP) synthase activity. Amiodarone, a cationic amphiphilic drug inhibits BMP synthase activity towards liposomal lysophosphatidylglycerol. Palmostatin B inhibits palmitoyl protein thioesterase activity. Its function is as follows. Catalyzes the synthesis of bis(monoacylglycero)phosphate (BMP) via transacylation of 2 molecules of lysophosphatidylglycerol (LPG). BMP also known as lysobisphosphatidic acid plays a key role in the formation of intraluminal vesicles and in maintaining intracellular cholesterol homeostasis. Can use only LPG as the exclusive lysophospholipid acyl donor for base exchange and displays BMP synthase activity towards various LPGs (LPG 14:0, LPG 16:0, LPG 18:0, LPG 18:1) with a higher preference for longer chain lengths. Plays a role in influencing the retrograde trafficking of lysosomal sorting receptors SORT1 and IGF2R from the endosomes to the trans-Golgi network by controlling the recruitment of retromer complex to the endosomal membrane. Regulates the localization and activation of RAB7A which is required to recruit the retromer complex to the endosomal membrane. In terms of biological role, exhibits palmitoyl protein thioesterase (S-depalmitoylation) activity in vitro and most likely plays a role in protein S-depalmitoylation. The polypeptide is Bis(monoacylglycero)phosphate synthase CLN5 (CLN5) (Homo sapiens (Human)).